The primary structure comprises 183 residues: Endoribonuclease YbeY (183 aa).

Residues His-118, His-122, and His-128 each coordinate Zn(2+). Positions 156-183 (EREQAQRSADSAVLGAVGLEEQDGPGTH) are disordered.

Belongs to the endoribonuclease YbeY family. Requires Zn(2+) as cofactor.

It localises to the cytoplasm. In terms of biological role, single strand-specific metallo-endoribonuclease involved in late-stage 70S ribosome quality control and in maturation of the 3' terminus of the 16S rRNA. The protein is Endoribonuclease YbeY of Saccharopolyspora erythraea (strain ATCC 11635 / DSM 40517 / JCM 4748 / NBRC 13426 / NCIMB 8594 / NRRL 2338).